Here is a 334-residue protein sequence, read N- to C-terminus: Glycerol-3-phosphate dehydrogenase [NAD(P)+] (334 aa).

NADPH-binding residues include serine 14, tyrosine 15, arginine 35, and lysine 109. Lysine 109, glycine 138, and threonine 140 together coordinate sn-glycerol 3-phosphate. Residue alanine 142 participates in NADPH binding. Residues lysine 194, aspartate 247, serine 257, arginine 258, and asparagine 259 each contribute to the sn-glycerol 3-phosphate site. Lysine 194 (proton acceptor) is an active-site residue. Arginine 258 contacts NADPH. The NADPH site is built by valine 282 and glutamate 284.

The protein belongs to the NAD-dependent glycerol-3-phosphate dehydrogenase family.

The protein localises to the cytoplasm. The catalysed reaction is sn-glycerol 3-phosphate + NAD(+) = dihydroxyacetone phosphate + NADH + H(+). It carries out the reaction sn-glycerol 3-phosphate + NADP(+) = dihydroxyacetone phosphate + NADPH + H(+). It functions in the pathway membrane lipid metabolism; glycerophospholipid metabolism. Catalyzes the reduction of the glycolytic intermediate dihydroxyacetone phosphate (DHAP) to sn-glycerol 3-phosphate (G3P), the key precursor for phospholipid synthesis. The polypeptide is Glycerol-3-phosphate dehydrogenase [NAD(P)+] (Colwellia psychrerythraea (strain 34H / ATCC BAA-681) (Vibrio psychroerythus)).